Consider the following 302-residue polypeptide: Probable alpha-L-glutamate ligase (302 aa).

The 184-residue stretch at 104-287 folds into the ATP-grasp domain; it reads LQLLSRKGVG…VAGLLIKFIE (184 aa). Residues Lys-141, 178–179, Asp-187, and 211–213 each bind ATP; these read EY and RSN. Mg(2+)-binding residues include Asp-248, Glu-260, and Asn-262. Mn(2+) contacts are provided by Asp-248, Glu-260, and Asn-262.

It belongs to the RimK family. Mg(2+) serves as cofactor. Requires Mn(2+) as cofactor.

The sequence is that of Probable alpha-L-glutamate ligase from Alcanivorax borkumensis (strain ATCC 700651 / DSM 11573 / NCIMB 13689 / SK2).